We begin with the raw amino-acid sequence, 238 residues long: Purine nucleoside phosphorylase DeoD-type (238 aa).

H5 lines the a purine D-ribonucleoside pocket. Phosphate-binding positions include G21, R25, R44, and 88-91; that span reads RIGT. Residues 180-182 and 204-205 each bind a purine D-ribonucleoside; these read DME and SD. The active-site Proton donor is D205.

This sequence belongs to the PNP/UDP phosphorylase family. In terms of assembly, homohexamer; trimer of homodimers.

The catalysed reaction is a purine D-ribonucleoside + phosphate = a purine nucleobase + alpha-D-ribose 1-phosphate. It carries out the reaction a purine 2'-deoxy-D-ribonucleoside + phosphate = a purine nucleobase + 2-deoxy-alpha-D-ribose 1-phosphate. Its function is as follows. Catalyzes the reversible phosphorolytic breakdown of the N-glycosidic bond in the beta-(deoxy)ribonucleoside molecules, with the formation of the corresponding free purine bases and pentose-1-phosphate. The chain is Purine nucleoside phosphorylase DeoD-type from Buchnera aphidicola subsp. Baizongia pistaciae (strain Bp).